The primary structure comprises 408 residues: Imidazolonepropionase (408 aa).

Fe(3+) contacts are provided by His73 and His75. Positions 73 and 75 each coordinate Zn(2+). 4-imidazolone-5-propanoate is bound by residues Arg82, Tyr145, and His178. Residue Tyr145 participates in N-formimidoyl-L-glutamate binding. His243 provides a ligand contact to Fe(3+). Residue His243 participates in Zn(2+) binding. Gln246 is a 4-imidazolone-5-propanoate binding site. Asp318 is a binding site for Fe(3+). Zn(2+) is bound at residue Asp318. N-formimidoyl-L-glutamate is bound by residues Asn320 and Gly322. Ser323 provides a ligand contact to 4-imidazolone-5-propanoate.

This sequence belongs to the metallo-dependent hydrolases superfamily. HutI family. Zn(2+) is required as a cofactor. It depends on Fe(3+) as a cofactor.

The protein resides in the cytoplasm. It catalyses the reaction 4-imidazolone-5-propanoate + H2O = N-formimidoyl-L-glutamate. The protein operates within amino-acid degradation; L-histidine degradation into L-glutamate; N-formimidoyl-L-glutamate from L-histidine: step 3/3. In terms of biological role, catalyzes the hydrolytic cleavage of the carbon-nitrogen bond in imidazolone-5-propanoate to yield N-formimidoyl-L-glutamate. It is the third step in the universal histidine degradation pathway. This Shewanella sp. (strain ANA-3) protein is Imidazolonepropionase.